Reading from the N-terminus, the 98-residue chain is Mobilization protein MobS (98 aa).

Functionally, this protein is essential to promote the specific transfer of the plasmid in the presence of conjugative plasmids. This Acidithiobacillus ferridurans protein is Mobilization protein MobS (mobS).